The sequence spans 459 residues: Vasoactive intestinal polypeptide receptor 1 (459 aa).

The first 30 residues, 1–30 (MRPPSPPHVRWLCVLAGALACALRPAGSQA), serve as a signal peptide directing secretion. Topologically, residues 31 to 142 (ASPQHECEYL…EQQQTKFYNT (112 aa)) are extracellular. Intrachain disulfides connect Cys-37–Cys-209, Cys-50–Cys-72, Cys-63–Cys-105, Cys-86–Cys-122, and Cys-216–Cys-286. Residues Asn-58, Asn-69, and Asn-100 are each glycosylated (N-linked (GlcNAc...) asparagine). A helical transmembrane segment spans residues 143 to 167 (VKTGYTIGYSLSLASLLVAMAILSL). The Cytoplasmic segment spans residues 168–175 (FRKLHCTR). A helical transmembrane segment spans residues 176 to 197 (NYIHMHLFMSFILRATAVFIKD). At 198 to 217 (MALFNSGEIDHCSEASVGCK) the chain is on the extracellular side. Residues 218–242 (AAVVFFQYCVMANFFWLLVEGLYLY) form a helical membrane-spanning segment. The Cytoplasmic segment spans residues 243 to 255 (TLLAVSFFSERKY). A helical membrane pass occupies residues 256 to 277 (FWGYILIGWGVPSVFITIWTVV). Residues 278–293 (RIYFEDFGCWDTIINS) are Extracellular-facing. N-linked (GlcNAc...) asparagine glycosylation occurs at Asn-292. A helical membrane pass occupies residues 294 to 318 (SLWWIIKAPILLSILVNFVLFICII). At 319–340 (RILVQKLRPPDIGKNDSSPYSR) the chain is on the cytoplasmic side. A helical membrane pass occupies residues 341–361 (LAKSTLLLIPLFGIHYVMFAF). Residues 362–369 (FPDNFKAQ) lie on the Extracellular side of the membrane. A helical transmembrane segment spans residues 370–393 (VKMVFELVVGSFQGFVVAILYCFL). Over 394–459 (NGEVQAELRR…SSFQAEVSLV (66 aa)) the chain is Cytoplasmic.

This sequence belongs to the G-protein coupled receptor 2 family. In terms of assembly, interacts with ADCYAP1/PACAP; activated by both PACAP27 and PACAP38 neuropeptides. Interacts with VIP; the interaction results in VIPR1 activation. In terms of tissue distribution, in liver, lung, intestines, thymus and brain (mostly in the cerebral cortex and hippocampus).

The protein localises to the cell membrane. G protein-coupled receptor activated by the neuropeptides vasoactive intestinal peptide (VIP) and pituitary adenylate cyclase-activating polypeptide (ADCYAP1/PACAP). Binds VIP and both PACAP27 and PACAP38 bioactive peptides with the following order of ligand affinity VIP = PACAP27 &gt; PACAP38. Ligand binding causes a conformation change that triggers signaling via guanine nucleotide-binding proteins (G proteins) and modulates the activity of downstream effectors. Activates cAMP-dependent pathway. The chain is Vasoactive intestinal polypeptide receptor 1 from Rattus norvegicus (Rat).